Consider the following 276-residue polypeptide: Pantothenate synthetase (276 aa).

27-34 (MGALHKGH) contributes to the ATP binding site. The active-site Proton donor is His-34. Residue Gln-58 coordinates (R)-pantoate. Residue Gln-58 participates in beta-alanine binding. 147–150 (GKKD) is an ATP binding site. Gln-153 is a (R)-pantoate binding site. ATP-binding positions include Val-176 and 184–187 (LSSR).

The protein belongs to the pantothenate synthetase family. In terms of assembly, homodimer.

The protein localises to the cytoplasm. It carries out the reaction (R)-pantoate + beta-alanine + ATP = (R)-pantothenate + AMP + diphosphate + H(+). It functions in the pathway cofactor biosynthesis; (R)-pantothenate biosynthesis; (R)-pantothenate from (R)-pantoate and beta-alanine: step 1/1. Its function is as follows. Catalyzes the condensation of pantoate with beta-alanine in an ATP-dependent reaction via a pantoyl-adenylate intermediate. The polypeptide is Pantothenate synthetase (Helicobacter pylori (strain ATCC 700392 / 26695) (Campylobacter pylori)).